A 123-amino-acid polypeptide reads, in one-letter code: Proteasome assembly chaperone 4 (123 aa).

This sequence belongs to the PSMG4 family. As to quaternary structure, interacts with PSMG3. Associates with alpha subunits of the 20S proteasome.

Chaperone protein which promotes assembly of the 20S proteasome. In Mus musculus (Mouse), this protein is Proteasome assembly chaperone 4 (Psmg4).